Reading from the N-terminus, the 332-residue chain is Biotin synthase (332 aa).

The region spanning 53-282 (YFGKKVKLNM…TKEIRISGGR (230 aa)) is the Radical SAM core domain. Residues cysteine 71, cysteine 75, and cysteine 78 each coordinate [4Fe-4S] cluster. Residues cysteine 115, cysteine 147, cysteine 207, and arginine 277 each coordinate [2Fe-2S] cluster.

This sequence belongs to the radical SAM superfamily. Biotin synthase family. In terms of assembly, homodimer. [4Fe-4S] cluster serves as cofactor. It depends on [2Fe-2S] cluster as a cofactor.

The enzyme catalyses (4R,5S)-dethiobiotin + (sulfur carrier)-SH + 2 reduced [2Fe-2S]-[ferredoxin] + 2 S-adenosyl-L-methionine = (sulfur carrier)-H + biotin + 2 5'-deoxyadenosine + 2 L-methionine + 2 oxidized [2Fe-2S]-[ferredoxin]. Its pathway is cofactor biosynthesis; biotin biosynthesis; biotin from 7,8-diaminononanoate: step 2/2. Its function is as follows. Catalyzes the conversion of dethiobiotin (DTB) to biotin by the insertion of a sulfur atom into dethiobiotin via a radical-based mechanism. The polypeptide is Biotin synthase (Bacillus thuringiensis (strain Al Hakam)).